The chain runs to 62 residues: Photosystem II reaction center protein Z (62 aa).

A run of 2 helical transmembrane segments spans residues 8 to 28 (AVFA…VVFA) and 41 to 61 (FSGT…NSLI).

It belongs to the PsbZ family. PSII is composed of 1 copy each of membrane proteins PsbA, PsbB, PsbC, PsbD, PsbE, PsbF, PsbH, PsbI, PsbJ, PsbK, PsbL, PsbM, PsbT, PsbY, PsbZ, Psb30/Ycf12, at least 3 peripheral proteins of the oxygen-evolving complex and a large number of cofactors. It forms dimeric complexes.

It is found in the plastid. It localises to the chloroplast thylakoid membrane. Functionally, may control the interaction of photosystem II (PSII) cores with the light-harvesting antenna, regulates electron flow through the 2 photosystem reaction centers. PSII is a light-driven water plastoquinone oxidoreductase, using light energy to abstract electrons from H(2)O, generating a proton gradient subsequently used for ATP formation. The polypeptide is Photosystem II reaction center protein Z (Glycine max (Soybean)).